A 66-amino-acid chain; its full sequence is DNA-directed RNA polymerase subunit Rpo10 (66 aa).

Zn(2+) is bound by residues Cys7, Cys10, Cys44, and Cys45.

Belongs to the archaeal Rpo10/eukaryotic RPB10 RNA polymerase subunit family. As to quaternary structure, part of the RNA polymerase complex. Zn(2+) serves as cofactor.

It is found in the cytoplasm. It catalyses the reaction RNA(n) + a ribonucleoside 5'-triphosphate = RNA(n+1) + diphosphate. Its function is as follows. DNA-dependent RNA polymerase (RNAP) catalyzes the transcription of DNA into RNA using the four ribonucleoside triphosphates as substrates. This Saccharolobus islandicus (strain Y.N.15.51 / Yellowstone #2) (Sulfolobus islandicus) protein is DNA-directed RNA polymerase subunit Rpo10.